The chain runs to 102 residues: Glycoprotein 24A (102 aa).

This sequence belongs to the csb family. In terms of processing, O-glycosylated.

It localises to the cell surface. Its function is as follows. Cell-cell adhesion during early development. The polypeptide is Glycoprotein 24A (csbA) (Dictyostelium discoideum (Social amoeba)).